A 235-amino-acid polypeptide reads, in one-letter code: Probable GTP-binding protein EngB (235 aa).

The EngB-type G domain occupies 23 to 219 (QVPEIAFAGR…NDKIIELLGL (197 aa)). Residues 31–38 (GRSNAGKS), 58–62 (GRTQH), 92–95 (DLPG), 159–162 (TKSD), and 193–200 (FTAQMFSA) contribute to the GTP site. The Mg(2+) site is built by Ser-38 and Thr-60.

The protein belongs to the TRAFAC class TrmE-Era-EngA-EngB-Septin-like GTPase superfamily. EngB GTPase family. Requires Mg(2+) as cofactor.

Functionally, necessary for normal cell division and for the maintenance of normal septation. This chain is Probable GTP-binding protein EngB, found in Janthinobacterium sp. (strain Marseille) (Minibacterium massiliensis).